A 689-amino-acid polypeptide reads, in one-letter code: Glycine--tRNA ligase beta subunit (689 aa).

It belongs to the class-II aminoacyl-tRNA synthetase family. Tetramer of two alpha and two beta subunits.

It localises to the cytoplasm. The catalysed reaction is tRNA(Gly) + glycine + ATP = glycyl-tRNA(Gly) + AMP + diphosphate. This Yersinia enterocolitica serotype O:8 / biotype 1B (strain NCTC 13174 / 8081) protein is Glycine--tRNA ligase beta subunit.